The sequence spans 698 residues: Elongation factor G (698 aa).

The region spanning 10 to 285 is the tr-type G domain; it reads DKTRNIGIMA…GVVDYLPSPL (276 aa). GTP-binding positions include 19–26, 83–87, and 137–140; these read AHIDAGKT, DTPGH, and NKMD.

Belongs to the TRAFAC class translation factor GTPase superfamily. Classic translation factor GTPase family. EF-G/EF-2 subfamily.

The protein resides in the cytoplasm. Functionally, catalyzes the GTP-dependent ribosomal translocation step during translation elongation. During this step, the ribosome changes from the pre-translocational (PRE) to the post-translocational (POST) state as the newly formed A-site-bound peptidyl-tRNA and P-site-bound deacylated tRNA move to the P and E sites, respectively. Catalyzes the coordinated movement of the two tRNA molecules, the mRNA and conformational changes in the ribosome. This is Elongation factor G from Lactobacillus johnsonii (strain CNCM I-12250 / La1 / NCC 533).